Consider the following 215-residue polypeptide: Peptide methionine sulfoxide reductase MsrA (215 aa).

Cys-58 is an active-site residue.

This sequence belongs to the MsrA Met sulfoxide reductase family.

It carries out the reaction L-methionyl-[protein] + [thioredoxin]-disulfide + H2O = L-methionyl-(S)-S-oxide-[protein] + [thioredoxin]-dithiol. It catalyses the reaction [thioredoxin]-disulfide + L-methionine + H2O = L-methionine (S)-S-oxide + [thioredoxin]-dithiol. In terms of biological role, has an important function as a repair enzyme for proteins that have been inactivated by oxidation. Catalyzes the reversible oxidation-reduction of methionine sulfoxide in proteins to methionine. The protein is Peptide methionine sulfoxide reductase MsrA of Pseudomonas aeruginosa (strain UCBPP-PA14).